The following is a 556-amino-acid chain: Secreted lipase 4 (556 aa).

The N-terminal stretch at 1-21 (MKLLTNIGTLLALSPVQQVSA) is a signal peptide. N46, N263, N305, N411, and N453 each carry an N-linked (GlcNAc...) asparagine glycan.

Belongs to the type-B carboxylesterase/lipase family.

The protein localises to the secreted. It catalyses the reaction a carboxylic ester + H2O = an alcohol + a carboxylate + H(+). Secreted lipase involved in plant virulence. Has a substrate preference for p-nitrophenyl esters with a carbon chain length of C12 (p-nitrophenyl laureate). The polypeptide is Secreted lipase 4 (Gibberella zeae (strain ATCC MYA-4620 / CBS 123657 / FGSC 9075 / NRRL 31084 / PH-1) (Wheat head blight fungus)).